Reading from the N-terminus, the 55-residue chain is Large ribosomal subunit protein bL33 (55 aa).

The protein belongs to the bacterial ribosomal protein bL33 family.

In Beijerinckia indica subsp. indica (strain ATCC 9039 / DSM 1715 / NCIMB 8712), this protein is Large ribosomal subunit protein bL33.